The sequence spans 479 residues: Sulfate adenylyltransferase subunit 1 (479 aa).

The tr-type G domain occupies 22-238 (KDMLRFLTCG…DSMDISKEPK (217 aa)). Positions 31–38 (GSVDDGKS) are G1. 31-38 (GSVDDGKS) provides a ligand contact to GTP. The segment at 89–93 (GITID) is G2. Residues 110–113 (DTPG) form a G3 region. GTP is bound by residues 110-114 (DTPGH) and 165-168 (NKMD). The G4 stretch occupies residues 165-168 (NKMD). Positions 202–204 (SAL) are G5.

The protein belongs to the TRAFAC class translation factor GTPase superfamily. Classic translation factor GTPase family. CysN/NodQ subfamily. Heterodimer composed of CysD, the smaller subunit, and CysN.

It catalyses the reaction sulfate + ATP + H(+) = adenosine 5'-phosphosulfate + diphosphate. It participates in sulfur metabolism; hydrogen sulfide biosynthesis; sulfite from sulfate: step 1/3. Functionally, with CysD forms the ATP sulfurylase (ATPS) that catalyzes the adenylation of sulfate producing adenosine 5'-phosphosulfate (APS) and diphosphate, the first enzymatic step in sulfur assimilation pathway. APS synthesis involves the formation of a high-energy phosphoric-sulfuric acid anhydride bond driven by GTP hydrolysis by CysN coupled to ATP hydrolysis by CysD. This Sulfurovum sp. (strain NBC37-1) protein is Sulfate adenylyltransferase subunit 1.